The sequence spans 604 residues: Kelch-like protein 15 (604 aa).

The BTB domain occupies 31–98 (LDVTLVIEDH…MYYGTIELSM (68 aa)). The region spanning 133-237 (CAEIMRLLDD…TPSSVFEKVK (105 aa)) is the BACK domain. Kelch repeat units lie at residues 328–379 (FVFL…VIGK), 381–426 (IYAV…VLNN), 428–473 (LFIT…NKSK), 489–542 (KLYV…VLDK), and 544–590 (IMVL…VCNL).

Homodimer. Dimerization does not affect PPP2R5B-binding, but is required for its proteasomal degradation. Interacts with CUL3. Directly interacts with PPP2R5B; this interaction leads to PPP2R5B proteasomal degradation. Interacts with RBBP8/CtIP; this interaction leads to RBBP8 proteasomal degradation. Interacts with PACMP micropeptide; interaction prevents ubiquitination and degradation of RBBP8/CtIP.

It is found in the nucleus. It participates in protein modification; protein ubiquitination. Functionally, substrate-specific adapter for CUL3 E3 ubiquitin-protein ligase complex. Acts as an adapter for CUL3 to target the serine/threonine-protein phosphatase 2A (PP2A) subunit PPP2R5B for ubiquitination and subsequent proteasomal degradation, thus promoting exchange with other regulatory subunits and regulating PP2A holoenzyme composition. Acts as an adapter for CUL3 to target the DNA-end resection factor RBBP8/CtIP for ubiquitination and subsequent proteasomal degradation. Through the regulation of RBBP8/CtIP protein turnover, plays a key role in DNA damage response, favoring DNA double-strand repair through error-prone non-homologous end joining (NHEJ) over error-free, RBBP8-mediated homologous recombination (HR). The chain is Kelch-like protein 15 (Klhl15) from Mus musculus (Mouse).